Here is a 131-residue protein sequence, read N- to C-terminus: SPbeta prophage-derived uncharacterized protein YomZ (131 aa).

The chain is SPbeta prophage-derived uncharacterized protein YomZ (yomZ) from Bacillus subtilis (strain 168).